A 314-amino-acid polypeptide reads, in one-letter code: Methionyl-tRNA formyltransferase (314 aa).

113-116 (SLLP) is a (6S)-5,6,7,8-tetrahydrofolate binding site.

It belongs to the Fmt family.

It carries out the reaction L-methionyl-tRNA(fMet) + (6R)-10-formyltetrahydrofolate = N-formyl-L-methionyl-tRNA(fMet) + (6S)-5,6,7,8-tetrahydrofolate + H(+). Its function is as follows. Attaches a formyl group to the free amino group of methionyl-tRNA(fMet). The formyl group appears to play a dual role in the initiator identity of N-formylmethionyl-tRNA by promoting its recognition by IF2 and preventing the misappropriation of this tRNA by the elongation apparatus. This Ectopseudomonas mendocina (strain ymp) (Pseudomonas mendocina) protein is Methionyl-tRNA formyltransferase.